The primary structure comprises 199 residues: Hematopoietic prostaglandin D synthase (199 aa).

The region spanning 2–79 (PNYKLLYFNM…YLTKNTDLAG (78 aa)) is the GST N-terminal domain. Residues tyrosine 8, arginine 14, tryptophan 39, 49 to 51 (GKI), and 63 to 64 (QS) each bind glutathione. Residues 81 to 199 (TALEQCQADA…WILKRPQTKL (119 aa)) enclose the GST C-terminal domain.

It belongs to the GST superfamily. Sigma family. In terms of assembly, homodimer. It depends on glutathione as a cofactor. As to expression, expressed in skin and oviduct.

Its subcellular location is the cytoplasm. The enzyme catalyses prostaglandin H2 = prostaglandin D2. It catalyses the reaction RX + glutathione = an S-substituted glutathione + a halide anion + H(+). It carries out the reaction 2-glyceryl-prostaglandin H2 = 2-glyceryl-prostaglandin D2. Bifunctional enzyme which catalyzes both the conversion of PGH2 to PGD2, a prostaglandin involved in smooth muscle contraction/relaxation and a potent inhibitor of platelet aggregation, and the conjugation of glutathione with a wide range of aryl halides and organic isothiocyanates. Also exhibits low glutathione-peroxidase activity. This Mus musculus (Mouse) protein is Hematopoietic prostaglandin D synthase.